The chain runs to 948 residues: MATEFSWDEIKKENVDLERIPVEEVFEQLKCSKEGLSSDEGAKRLEIFGANKLEEKSENKFLKFLGFMWNPLSWVMESAAIMAIVLANGGGKAPDWQDFIGIMVLLIINSTISFIEENNAGNAAAALMANLAPKTKVLRDGKWGEQEASILVPGDLISIKLGDIVPADARLLEGDPLKIDQSALTGESLPTTKHPGDEVFSGSTCKQGEIEAVVIATGVHTFFGKAAHLVDSTNNVGHFQKVLTSIGNFCICSIGLGMLIEILIMYPIQHRTYRDGIDNLLVLLIGGIPIAMPTVLSVTMAIGSHRLSQQGAITKRMTAIEEMAGMDVLCSDKTGTLTLNKLSVDKSLIEVFPKNMDSDSVVLMAARASRIENQDAIDASIVGMLGDPKEARAGITEVHFLPFNPVDKRTAITYIDESGDWHRSSKGAPEQIIELCNLQGETKRKAHEVIDGFAERGLRSLGVAQQTVPEKTKESDGSPWEFVGLLPLFDPPRHDSAETIRRALELGVNVKMITGDQLAIGIETGRRLGMGTNMYPSTSLLGNSKDESLVGIPIDELIEKADGFAGVFPEHKYEIVKKLQERKHICGMTGDGVNDAPALKKADIGIAVADATDAARSASDIVLTEPGLSVIISAVLTSRAIFQRMKNYTIYAVSITIRIVLGFMLVALIWRFDFAPFMVLIIAILNDGTIMTISKDRVKPSPVPDSWKLNEIFATGVVLGTYMALTTVLFFWLAHDTDFFSKTFGVRSIQGNEEELMAALYLQVSIISQALIFVTRSRSWSFVERPGFLLLIAFVIAQLVATLIAVYANWGFARIVGCGWGWAGGIWVYSIITYIPLDILKFIIRYALTGKAWDNMINQKTAFTTKKDYGKGEREAQWALAQRTLHGLPPPEAMFNDNKNELSEIAEQAKRRAEVARLRELHTLKGHVESVVKLKGLDIDTIQQHYTV.

Over 1–64 the chain is Cytoplasmic; that stretch reads MATEFSWDEI…EKSENKFLKF (64 aa). Residues 65–84 traverse the membrane as a helical segment; sequence LGFMWNPLSWVMESAAIMAI. Residues 85–96 are Extracellular-facing; it reads VLANGGGKAPDW. A helical membrane pass occupies residues 97-117; the sequence is QDFIGIMVLLIINSTISFIEE. The Cytoplasmic portion of the chain corresponds to 118-246; the sequence is NNAGNAAAAL…GHFQKVLTSI (129 aa). A helical transmembrane segment spans residues 247–267; that stretch reads GNFCICSIGLGMLIEILIMYP. Residues 268-276 are Extracellular-facing; it reads IQHRTYRDG. A helical transmembrane segment spans residues 277 to 294; sequence IDNLLVLLIGGIPIAMPT. Topologically, residues 295–646 are cytoplasmic; sequence VLSVTMAIGS…TSRAIFQRMK (352 aa). Asp-332 (4-aspartylphosphate intermediate) is an active-site residue. Asp-591 and Asp-595 together coordinate Mg(2+). A helical transmembrane segment spans residues 647–668; the sequence is NYTIYAVSITIRIVLGFMLVAL. The Extracellular portion of the chain corresponds to 669–673; that stretch reads IWRFD. Residues 674–696 traverse the membrane as a helical segment; the sequence is FAPFMVLIIAILNDGTIMTISKD. At 697 to 712 the chain is on the cytoplasmic side; that stretch reads RVKPSPVPDSWKLNEI. A helical transmembrane segment spans residues 713 to 733; it reads FATGVVLGTYMALTTVLFFWL. Residues 734-754 are Extracellular-facing; it reads AHDTDFFSKTFGVRSIQGNEE. The chain crosses the membrane as a helical span at residues 755–775; that stretch reads ELMAALYLQVSIISQALIFVT. Topologically, residues 776-787 are cytoplasmic; that stretch reads RSRSWSFVERPG. Residues 788-808 form a helical membrane-spanning segment; it reads FLLLIAFVIAQLVATLIAVYA. Over 809–816 the chain is Extracellular; sequence NWGFARIV. The helical transmembrane segment at 817–837 threads the bilayer; it reads GCGWGWAGGIWVYSIITYIPL. The Cytoplasmic segment spans residues 838–948; it reads DILKFIIRYA…IDTIQQHYTV (111 aa). At Thr-884 the chain carries Phosphothreonine. At Ser-930 the chain carries Phosphoserine. An interaction with 14-3-3 proteins region spans residues 946–948; the sequence is YTV. A Phosphothreonine modification is found at Thr-947.

Belongs to the cation transport ATPase (P-type) (TC 3.A.3) family. Type IIIA subfamily. Binds to 14-3-3 proteins. The binding is induced by phosphorylation of Thr-947. Binding to 14-3-3 proteins activates the H(+)-ATPase. In terms of tissue distribution, expressed in guard cells, roots and leaves, and barely in mesophyll cells.

The protein localises to the membrane. The enzyme catalyses ATP + H2O + H(+)(in) = ADP + phosphate + 2 H(+)(out). Its function is as follows. The plasma membrane H(+) ATPase of plants and fungi generates a proton gradient that drives the active transport of nutrients by H(+)-symport. The resulting external acidification and/or internal alkinization may mediate growth responses. The sequence is that of ATPase 8, plasma membrane-type (AHA8) from Arabidopsis thaliana (Mouse-ear cress).